Reading from the N-terminus, the 255-residue chain is Triosephosphate isomerase (255 aa).

Residue 9–11 (NWK) coordinates substrate. His-95 functions as the Electrophile in the catalytic mechanism. The Proton acceptor role is filled by Glu-167. Residues Gly-173, Ser-212, and 233-234 (GG) each bind substrate.

Belongs to the triosephosphate isomerase family. In terms of assembly, homodimer.

Its subcellular location is the cytoplasm. It carries out the reaction D-glyceraldehyde 3-phosphate = dihydroxyacetone phosphate. Its pathway is carbohydrate biosynthesis; gluconeogenesis. It participates in carbohydrate degradation; glycolysis; D-glyceraldehyde 3-phosphate from glycerone phosphate: step 1/1. Its function is as follows. Involved in the gluconeogenesis. Catalyzes stereospecifically the conversion of dihydroxyacetone phosphate (DHAP) to D-glyceraldehyde-3-phosphate (G3P). This is Triosephosphate isomerase from Escherichia fergusonii (strain ATCC 35469 / DSM 13698 / CCUG 18766 / IAM 14443 / JCM 21226 / LMG 7866 / NBRC 102419 / NCTC 12128 / CDC 0568-73).